Reading from the N-terminus, the 192-residue chain is Fe/S biogenesis protein NfuA (192 aa).

[4Fe-4S] cluster is bound by residues C150 and C153.

The protein belongs to the NfuA family. Homodimer. [4Fe-4S] cluster is required as a cofactor.

In terms of biological role, involved in iron-sulfur cluster biogenesis. Binds a 4Fe-4S cluster, can transfer this cluster to apoproteins, and thereby intervenes in the maturation of Fe/S proteins. Could also act as a scaffold/chaperone for damaged Fe/S proteins. The sequence is that of Fe/S biogenesis protein NfuA from Buchnera aphidicola subsp. Acyrthosiphon pisum (strain APS) (Acyrthosiphon pisum symbiotic bacterium).